The following is a 393-amino-acid chain: Arginine biosynthesis bifunctional protein ArgJ (393 aa).

Thr-143, Lys-168, Thr-179, Glu-265, Asn-388, and Thr-393 together coordinate substrate. Thr-179 serves as the catalytic Nucleophile.

The protein belongs to the ArgJ family. As to quaternary structure, heterotetramer of two alpha and two beta chains.

It localises to the cytoplasm. It carries out the reaction N(2)-acetyl-L-ornithine + L-glutamate = N-acetyl-L-glutamate + L-ornithine. The catalysed reaction is L-glutamate + acetyl-CoA = N-acetyl-L-glutamate + CoA + H(+). It functions in the pathway amino-acid biosynthesis; L-arginine biosynthesis; L-ornithine and N-acetyl-L-glutamate from L-glutamate and N(2)-acetyl-L-ornithine (cyclic): step 1/1. It participates in amino-acid biosynthesis; L-arginine biosynthesis; N(2)-acetyl-L-ornithine from L-glutamate: step 1/4. Catalyzes two activities which are involved in the cyclic version of arginine biosynthesis: the synthesis of N-acetylglutamate from glutamate and acetyl-CoA as the acetyl donor, and of ornithine by transacetylation between N(2)-acetylornithine and glutamate. This Syntrophotalea carbinolica (strain DSM 2380 / NBRC 103641 / GraBd1) (Pelobacter carbinolicus) protein is Arginine biosynthesis bifunctional protein ArgJ.